Consider the following 468-residue polypeptide: Zinc transporter SLC39A7 (468 aa).

Residues 10-30 (WVAVGLLTWAALGLLVAGHEG) traverse the membrane as a helical segment. Composition is skewed to basic and acidic residues over residues 36–56 (RDVE…DFHH) and 64–100 (HTHE…DSLH). The disordered stretch occupies residues 36–116 (RDVEEDFHGH…SHGASREAGA (81 aa)). The residue at position 64 (H64) is a Pros-methylhistidine. A run of 3 helical transmembrane segments spans residues 132–152 (ALGA…LIPV), 163–183 (LQIL…LHLI), and 208–228 (GPIL…LVVE). The segment covering 237-248 (GHGHAHAHGHGH) has biased composition (basic residues). A disordered region spans residues 237–313 (GHGHAHAHGH…NPEEEKTGSD (77 aa)). The span at 249–312 (SHGDSHAHGH…QNPEEEKTGS (64 aa)) shows a compositional bias: basic and acidic residues. 3 consecutive transmembrane segments (helical) span residues 385–405 (LTAI…GGAV), 409–429 (VAGG…FIYV), and 447–467 (SLLE…IAHL).

The protein belongs to the ZIP transporter (TC 2.A.5) family. KE4/Catsup subfamily. Homodimer. Post-translationally, rapidly phosphorylated by CK2 following Zn(2+) treatment. This phosphorylation is required for efficient cytosolic Zn(2+) release.

The protein localises to the endoplasmic reticulum membrane. Its subcellular location is the golgi apparatus. It localises to the cis-Golgi network membrane. It carries out the reaction Zn(2+)(in) = Zn(2+)(out). Transports Zn(2+) from the endoplasmic reticulum (ER)/Golgi apparatus to the cytosol, playing an essential role in the regulation of cytosolic zinc levels. Acts as a gatekeeper of zinc release from intracellular stores, requiring post-translational activation by phosphorylation on residues, resulting in activation of multiple downstream pathways leading to cell growth and proliferation. Has an essential role in B cell development and is required for proper B cell receptor signaling. Plays an important role in maintaining intestinal epithelial homeostasis and skin dermis development by regulating ER function. Controls cell signaling pathways involved in glucose metabolism in skeletal muscle. Has a protective role against ER stress in different biological contexts. Mediates Zn(2+)-induced ferroptosis. This is Zinc transporter SLC39A7 from Rattus norvegicus (Rat).